Reading from the N-terminus, the 282-residue chain is 4-diphosphocytidyl-2-C-methyl-D-erythritol kinase (282 aa).

K9 is an active-site residue. 98–108 (PMGGGLGGGSS) is an ATP binding site. D140 is an active-site residue.

This sequence belongs to the GHMP kinase family. IspE subfamily. Homodimer.

The enzyme catalyses 4-CDP-2-C-methyl-D-erythritol + ATP = 4-CDP-2-C-methyl-D-erythritol 2-phosphate + ADP + H(+). The protein operates within isoprenoid biosynthesis; isopentenyl diphosphate biosynthesis via DXP pathway; isopentenyl diphosphate from 1-deoxy-D-xylulose 5-phosphate: step 3/6. Functionally, catalyzes the phosphorylation of the position 2 hydroxy group of 4-diphosphocytidyl-2C-methyl-D-erythritol. This is 4-diphosphocytidyl-2-C-methyl-D-erythritol kinase from Klebsiella pneumoniae (strain 342).